A 308-amino-acid chain; its full sequence is Mycothiol acetyltransferase (308 aa).

N-acetyltransferase domains are found at residues 8-155 (RDVD…PRLR) and 160-308 (VQVR…RRAR). Glu-39 provides a ligand contact to 1D-myo-inositol 2-(L-cysteinylamino)-2-deoxy-alpha-D-glucopyranoside. Position 84–86 (84–86 (LVV)) interacts with acetyl-CoA. Glu-187, Lys-226, and Glu-240 together coordinate 1D-myo-inositol 2-(L-cysteinylamino)-2-deoxy-alpha-D-glucopyranoside. Acetyl-CoA-binding positions include 244–246 (LGI) and 251–257 (QGLGLGR). Tyr-278 serves as a coordination point for 1D-myo-inositol 2-(L-cysteinylamino)-2-deoxy-alpha-D-glucopyranoside.

Belongs to the acetyltransferase family. MshD subfamily. As to quaternary structure, monomer.

The enzyme catalyses 1D-myo-inositol 2-(L-cysteinylamino)-2-deoxy-alpha-D-glucopyranoside + acetyl-CoA = mycothiol + CoA + H(+). In terms of biological role, catalyzes the transfer of acetyl from acetyl-CoA to desacetylmycothiol (Cys-GlcN-Ins) to form mycothiol. In Geodermatophilus obscurus (strain ATCC 25078 / DSM 43160 / JCM 3152 / CCUG 61914 / KCC A-0152 / KCTC 9177 / NBRC 13315 / NRRL B-3577 / G-20), this protein is Mycothiol acetyltransferase.